The chain runs to 555 residues: Luciferin 2-monooxygenase (555 aa).

Residues 1 to 11 form the signal peptide; that stretch reads MKIIILSVILA. VWFD domains follow at residues 80 to 266 and 319 to 494; these read IECR…EYCK and GTCV…RLCN. 4 disulfides stabilise this stretch: C82–C222, C321–C454, C343–C493, and C352–C451. N-linked (GlcNAc...) asparagine glycosylation is found at N186 and N408.

The cysteine residues presumably exist in intramolecular disulfide bridges. In terms of processing, the N-terminus is blocked.

It carries out the reaction Cypridina luciferin + O2 = oxidized Cypridina luciferin + hnu + CO2. This is Luciferin 2-monooxygenase from Vargula hilgendorfii (Sea firefly).